Consider the following 332-residue polypeptide: tRNA uridine(34) hydroxylase (332 aa).

A Rhodanese domain is found at 123–217; that stretch reads SDPEVLLVDT…YLEEVKQEES (95 aa). The Cysteine persulfide intermediate role is filled by cysteine 177. Positions 302 to 332 are disordered; sequence SDVGAVIQSRRDNKENLKKSQVKLNNKKYNK. Residues 310-319 are compositionally biased toward basic and acidic residues; the sequence is SRRDNKENLK.

The protein belongs to the TrhO family.

It carries out the reaction uridine(34) in tRNA + AH2 + O2 = 5-hydroxyuridine(34) in tRNA + A + H2O. Its function is as follows. Catalyzes oxygen-dependent 5-hydroxyuridine (ho5U) modification at position 34 in tRNAs. In Shewanella woodyi (strain ATCC 51908 / MS32), this protein is tRNA uridine(34) hydroxylase.